Consider the following 339-residue polypeptide: NADPH dehydrogenase (339 aa).

Residue 24 to 27 (SPMC) participates in FMN binding. Position 29 (tyrosine 29) interacts with substrate. FMN is bound by residues alanine 61 and glutamine 103. A substrate-binding site is contributed by 165–168 (HGAH). Residues arginine 216 and 308-309 (AR) contribute to the FMN site.

The protein belongs to the NADH:flavin oxidoreductase/NADH oxidase family. NamA subfamily. Homotetramer. FMN serves as cofactor.

The enzyme catalyses A + NADPH + H(+) = AH2 + NADP(+). Functionally, catalyzes the reduction of the double bond of an array of alpha,beta-unsaturated aldehydes and ketones. It also reduces the nitro group of nitroester and nitroaromatic compounds. It could have a role in detoxification processes. This is NADPH dehydrogenase from Bacillus licheniformis (strain ATCC 14580 / DSM 13 / JCM 2505 / CCUG 7422 / NBRC 12200 / NCIMB 9375 / NCTC 10341 / NRRL NRS-1264 / Gibson 46).